A 417-amino-acid chain; its full sequence is Serine/threonine transporter SstT (417 aa).

The next 8 helical transmembrane spans lie at 21–41 (ILAGLIAGILLAWLAPEVAKM), 49–69 (FISALKAVAPVLVWVLVMASI), 83–103 (ILVLYLLATFFAALTAVVASF), 142–162 (ALINGNYMGILAWAIGLGLAL), 193–213 (IGIFGLVSSTIATTGFKALAG), 218–238 (LLVLIGCMLFVALVVNPLIVF), 291–311 (IPLGATINMGGAAITITILTL), and 331–351 (LVAAICACGASGVAGGSLLLI).

It belongs to the dicarboxylate/amino acid:cation symporter (DAACS) (TC 2.A.23) family.

Its subcellular location is the cell inner membrane. It carries out the reaction L-serine(in) + Na(+)(in) = L-serine(out) + Na(+)(out). The catalysed reaction is L-threonine(in) + Na(+)(in) = L-threonine(out) + Na(+)(out). Functionally, involved in the import of serine and threonine into the cell, with the concomitant import of sodium (symport system). In Proteus mirabilis (strain HI4320), this protein is Serine/threonine transporter SstT.